The following is a 258-amino-acid chain: Maintenance of carboxysome distribution protein A (258 aa).

The ATP site is built by Gly11, Gly12, Gln13, Gly14, Lys15, Thr16, Thr17, Gln40, Glu147, Lys151, Phe182, Arg183, Leu216, Glu217, Ser218, and Tyr221. Thr16 contributes to the Mg(2+) binding site.

The protein belongs to the ParA family. McdA subfamily. In terms of assembly, homodimerizes in the presence of ATP, making extra nucleotide contacts than with ADP or AMP-PNP. Each subunit binds 1 ATP molecule; Glu-147, Lys-151 and Arg-183 cross the dimer interface to contact ATP in the other subunit, while Phe-182, Arg-183 and Tyr-221 stack with the adenine base in their own subunit. Forms a complex with McdB.

It localises to the cytoplasm. Its subcellular location is the nucleoid. It catalyses the reaction ATP + H2O = ADP + phosphate + H(+). Functionally, mcdA and McdB together mediate carboxysome (Cb) spacing, size, ultrastructure and probably inheritance in the cell, together they prevent Cb aggregation. McdA is an ATPase that forms dynamic gradients on the nucleoid in response to adapter protein McdB, which associates with carboxysomes. The interplay between McdA gradients on the nucleoid and McdB-bound carboxysomes result in the equal spacing of Cbs along the cell length. Binds DNA saturably and strongly in the presence of Mg(2+)ATP; without ATP, DNA-binding is very poor (tested with a mutant that should not be able to hydrolyze ATP, Asp-38-Ala). Decreasing the NaCl concentration increases DNA binding. Its function is as follows. Incorrect positioning (aggregation) of carboxysomes results in reduced CO(2) fixation by encapsulated ribulose-1,5-bisphosphate carboxylase (RuBisCO, cbbL/cbbS), which leads to slower growth. The chain is Maintenance of carboxysome distribution protein A from Gloeothece citriformis (strain PCC 7424) (Cyanothece sp. (strain PCC 7424)).